Consider the following 394-residue polypeptide: Chaperone protein DnaJ (394 aa).

In terms of domain architecture, J spans D4–G68. The CR-type zinc finger occupies G136–T218. Residues C149, C152, C166, C169, C192, C195, C206, and C209 each coordinate Zn(2+). 4 CXXCXGXG motif repeats span residues C149 to G156, C166 to G173, C192 to G199, and C206 to G213.

The protein belongs to the DnaJ family. As to quaternary structure, homodimer. Requires Zn(2+) as cofactor.

The protein resides in the cytoplasm. Its function is as follows. Participates actively in the response to hyperosmotic and heat shock by preventing the aggregation of stress-denatured proteins and by disaggregating proteins, also in an autonomous, DnaK-independent fashion. Unfolded proteins bind initially to DnaJ; upon interaction with the DnaJ-bound protein, DnaK hydrolyzes its bound ATP, resulting in the formation of a stable complex. GrpE releases ADP from DnaK; ATP binding to DnaK triggers the release of the substrate protein, thus completing the reaction cycle. Several rounds of ATP-dependent interactions between DnaJ, DnaK and GrpE are required for fully efficient folding. Also involved, together with DnaK and GrpE, in the DNA replication of plasmids through activation of initiation proteins. The polypeptide is Chaperone protein DnaJ (Synechococcus sp. (strain JA-2-3B'a(2-13)) (Cyanobacteria bacterium Yellowstone B-Prime)).